A 185-amino-acid polypeptide reads, in one-letter code: Probable nicotinate-nucleotide adenylyltransferase (185 aa).

The protein belongs to the NadD family.

It catalyses the reaction nicotinate beta-D-ribonucleotide + ATP + H(+) = deamido-NAD(+) + diphosphate. The protein operates within cofactor biosynthesis; NAD(+) biosynthesis; deamido-NAD(+) from nicotinate D-ribonucleotide: step 1/1. In terms of biological role, catalyzes the reversible adenylation of nicotinate mononucleotide (NaMN) to nicotinic acid adenine dinucleotide (NaAD). In Cereibacter sphaeroides (strain ATCC 17025 / ATH 2.4.3) (Rhodobacter sphaeroides), this protein is Probable nicotinate-nucleotide adenylyltransferase.